A 506-amino-acid chain; its full sequence is MAPPQTIPRRGLFIGGAWREPCLGRRLPVVNPATEATIGDIPAGTAEDVEIAVAAARDAFSRDGGRHWSRAPGAVRANFLRAIAAKIKDRKSELALLETLDSGKPLDEASGDMDDVAACFEYYADLAEALDGKQQSPISLPMENFKSYVLKEPIGVVGLITPWNYPLLMATWKVAPALAAGCTTILKPSELASVSCLELGAICMEIGLPPGVLNIITGLGPEAGAPLSSHSHVDKVAFTGSTETGKRIMISAAQMVKPVSLELGGKSPLIVFDDIGDIDKAVEWTMFGIFANAGQVCSATSRLLLHEKIAKKFLDRLVAWAKNIKVSDPLEEGCRLGSVISEGQYEKIKKFISTARSEGATILYGGGRPQHLRRGFFLEPTIITDVSTSMQIWQEEVFGPVICVKEFRTESEAVELANDTHYGLAGAVISNDQERCERISKALHSGIIWINCSQPCFVQAPWGGNKRSGFGRELGEWGLDNYLTVKQVTKYCSDEPWGWYQPPSKL.

D101 is a binding site for Na(+). Residues 161-163 (TPW) and 187-190 (KPSE) contribute to the NAD(+) site. Residue L191 participates in Na(+) binding. NAD(+) is bound by residues 241 to 244 (STET) and E262. Catalysis depends on E262, which acts as the Proton acceptor. Residue C297 is the Nucleophile of the active site. NAD(+) contacts are provided by E396 and W462.

It belongs to the aldehyde dehydrogenase family.

It carries out the reaction 4-aminobutanal + NAD(+) + H2O = 4-aminobutanoate + NADH + 2 H(+). It catalyses the reaction 3-aminopropanal + NAD(+) + H2O = beta-alanine + NADH + 2 H(+). The catalysed reaction is 4-(trimethylamino)butanal + NAD(+) + H2O = 4-(trimethylamino)butanoate + NADH + 2 H(+). The enzyme catalyses 4-guanidinobutanal + NAD(+) + H2O = 4-guanidinobutanoate + NADH + 2 H(+). The protein operates within amine and polyamine biosynthesis; betaine biosynthesis via choline pathway; betaine from betaine aldehyde: step 1/1. In terms of biological role, dehydrogenase that catalyzes the oxidation of several aminoaldehydes. Metabolizes and detoxifies aldehyde products of polyamine degradation to non-toxic amino acids. Catalyzes the oxidation of 4-aminobutanal and 3-aminopropanal to 4-aminobutanoate and beta-alanine, respectively. Catalyzes the oxidation of 4-(trimethylamino)butanal and 4-guanidinobutanal to 4-trimethylammoniobutanoate and 4-guanidinobutanoate, respectively. This chain is Aminoaldehyde dehydrogenase 2, found in Zea mays (Maize).